We begin with the raw amino-acid sequence, 274 residues long: 26S proteasome regulatory subunit RPN12 (274 aa).

Residues 76 to 251 (DSFENYFNQL…KADYEDEMMH (176 aa)) enclose the PCI domain.

Belongs to the proteasome subunit S14 family.

In terms of biological role, acts as a regulatory subunit of the 26S proteasome which is involved in the ATP-dependent degradation of ubiquitinated proteins. Necessary for activation of the CDC28 kinase. This Saccharomyces cerevisiae (strain ATCC 204508 / S288c) (Baker's yeast) protein is 26S proteasome regulatory subunit RPN12 (RPN12).